Reading from the N-terminus, the 562-residue chain is MTTTTTVKSDIEIAQEASMKKIQEIAADLNILEDELEPYGHYKGKLSLDIFKRLQNEKDGKVVLVTAINPTPAGEGKSTVTVGLGQAFNKIGKKTVIALREPSLGPTMGLKGGAAGGGFSQVVPMEDINLHFTGDIHAITTANNALAAFIDNHIQQGNTLGIDTRKIVWKRCVDLNDRALRNVVIGLGGPVQGVPREDGFDITVASEIMAVFCLATDIQDLKARLSRIVVAYNFANQPVTVKDLGVEGALTLLLKDALKPNLVQTLENTPAIIHGGPFANIAHGCNSVIATTMAAKLGDYVITEAGFGADLGAEKFLDIKARAAGIKPEAVVIVATIRALKMHGGVAKDQLKEENVDALAKGMENLQKHVETIQSFGVPFVIAINKFITDTDAEVAYLQEWCNERGYAVSLTEVWEKGGQGGVDLAEKVLKEIEKGENNYAPLYELELPLEEKIRTIAQKVYGAKDIEFAPKARKQLAQYEGEGWSNLPICMAKTQYSLSDDATKLGRPSDFIVTIRELKPSIGAGFIVALTGTMLTMPGLPKQPAALQMDVNEDGKAVGLF.

71–78 (TPAGEGKS) provides a ligand contact to ATP.

Belongs to the formate--tetrahydrofolate ligase family.

It catalyses the reaction (6S)-5,6,7,8-tetrahydrofolate + formate + ATP = (6R)-10-formyltetrahydrofolate + ADP + phosphate. It functions in the pathway one-carbon metabolism; tetrahydrofolate interconversion. The protein is Formate--tetrahydrofolate ligase of Bacillus thuringiensis (strain Al Hakam).